A 294-amino-acid chain; its full sequence is Survival motor neuron protein (294 aa).

The segment covering 1 to 12 has biased composition (gly residues); the sequence is MAMSSGGSGGGV. Residues 1 to 32 form a disordered region; it reads MAMSSGGSGGGVPEQEDSVLFRRGTGQSDDSD. Ala2 carries the N-acetylalanine modification. Residues Ser4, Ser5, and Ser8 each carry the phosphoserine; by PKA modification. The tract at residues 13-44 is P1 (binding site for GEMIN2); sequence PEQEDSVLFRRGTGQSDDSDIWDDTALIKAYD. Phosphothreonine is present on Thr25. Phosphoserine is present on residues Ser28 and Ser31. Residue Lys51 forms a Glycyl lysine isopeptide (Lys-Gly) (interchain with G-Cter in SUMO2) linkage. Positions 58 to 88 are disordered; the sequence is DICETSGKPKTTPKRKPAKKNKSQKKNTAAP. Basic residues predominate over residues 68–82; it reads TTPKRKPAKKNKSQK. Phosphothreonine is present on Thr69. Thr85 is subject to Phosphothreonine; by PKA. The Tudor domain occupies 91-151; sequence QWKVGDKCSA…LSPISEVANN (61 aa). The segment at 97–209 is required for interaction with RPP20/POP7; that stretch reads KCSAIWSEDG…MPGPRLGPGK (113 aa). The span at 156–166 shows a compositional bias: low complexity; sequence AQENENESQVS. The segment at 156–222 is disordered; it reads AQENENESQV…KFNGPPPPPP (67 aa). Ser187 is modified (phosphoserine; by PKA). A compositionally biased stretch (pro residues) spans 194-204; sequence LPPPPPMPGPR. A Glycyl lysine isopeptide (Lys-Gly) (interchain with G-Cter in SUMO2) cross-link involves residue Lys209. The P2 (binding site for SM B) stretch occupies residues 240 to 267; that stretch reads PPIIPPPPPICPDSLDDADALGSMLISW. The required for interaction with SYNCRIP stretch occupies residues 279 to 294; it reads GFRQNQKEGRCSHSLN.

Belongs to the SMN family. In terms of assembly, homooligomer; may form higher order homooligomers in the dimer to octamer range. Part of the core SMN complex that contains SMN1, GEMIN2/SIP1, DDX20/GEMIN3, GEMIN4, GEMIN5, GEMIN6, GEMIN7, GEMIN8 and STRAP/UNRIP. Part of the SMN-Sm complex that contains SMN1, GEMIN2/SIP1, DDX20/GEMIN3, GEMIN4, GEMIN5, GEMIN6, GEMIN7, GEMIN8, STRAP/UNRIP and the Sm proteins SNRPB, SNRPD1, SNRPD2, SNRPD3, SNRPE, SNRPF and SNRPG. Component of an import snRNP complex composed of KPNB1, RNUT1, SMN1 and ZNF259. Interacts with DDX20, FBL, NOLA1, RNUT1, SYNCRIP and with several spliceosomal snRNP core Sm proteins, including SNRPB, SNRPD1, SNRPD2, SNRPD3, SNRPE and ILF3. Interacts with GEMIN2; the interaction is direct. Interacts with GEMIN3; the interaction is direct. Interacts with GEMIN8; the interaction is direct. Interacts with SNRPB; the interaction is direct. Interacts (via Tudor domain) with SNRPD1 (via C-terminus); the interaction is direct. Interacts with SNRPD2; the interaction is direct. Interacts (via Tudor domain) with SNRPD3 (via C-terminus); the interaction is direct. Interacts with SNRPE; the interaction is direct. Interacts with OSTF1, LSM10, LSM11 and RPP20/POP7. Interacts (via C-terminal region) with ZPR1 (via C-terminal region). Interacts (via Tudor domain) with COIL. Interacts with SETX; recruits SETX to POLR2A. Interacts with POLR2A (via the C-terminal domain (CTD)). Interacts with PRMT5. Interacts with XRN2. Interacts (via C-terminus) with FMR1 (via C-terminus); the interaction is direct and occurs in a RNA-independent manner. Interacts (via Tudor domain) with SF3B2 ('Arg-508'-methylated form). Interacts with WRAP53/TCAB1. Interacts (via Tudor domain) with ELAVL4 in an RNA-independent manner; the interaction is required for localization of ELAVL4 to RNA granules. Interacts with FRG1.

Its subcellular location is the nucleus. The protein resides in the gem. The protein localises to the cajal body. It is found in the cytoplasm. It localises to the cytoplasmic granule. Its subcellular location is the perikaryon. The protein resides in the cell projection. The protein localises to the neuron projection. It is found in the axon. It localises to the myofibril. Its subcellular location is the sarcomere. The protein resides in the z line. Functionally, the SMN complex catalyzes the assembly of small nuclear ribonucleoproteins (snRNPs), the building blocks of the spliceosome, and thereby plays an important role in the splicing of cellular pre-mRNAs. Most spliceosomal snRNPs contain a common set of Sm proteins SNRPB, SNRPD1, SNRPD2, SNRPD3, SNRPE, SNRPF and SNRPG that assemble in a heptameric protein ring on the Sm site of the small nuclear RNA to form the core snRNP (Sm core). In the cytosol, the Sm proteins SNRPD1, SNRPD2, SNRPE, SNRPF and SNRPG are trapped in an inactive 6S pICln-Sm complex by the chaperone CLNS1A that controls the assembly of the core snRNP. To assemble core snRNPs, the SMN complex accepts the trapped 5Sm proteins from CLNS1A forming an intermediate. Binding of snRNA inside 5Sm ultimately triggers eviction of the SMN complex, thereby allowing binding of SNRPD3 and SNRPB to complete assembly of the core snRNP. Within the SMN complex, SMN1 acts as a structural backbone and together with GEMIN2 it gathers the Sm complex subunits. Ensures the correct splicing of U12 intron-containing genes that may be important for normal motor and proprioceptive neurons development. Also required for resolving RNA-DNA hybrids created by RNA polymerase II, that form R-loop in transcription terminal regions, an important step in proper transcription termination. May also play a role in the metabolism of small nucleolar ribonucleoprotein (snoRNPs). This Macaca fascicularis (Crab-eating macaque) protein is Survival motor neuron protein (SMN1).